The chain runs to 269 residues: Eukaryotic translation initiation factor 3 subunit G-1 (269 aa).

Residues 188–266 (AAIRISNLSE…LILSVEWSKP (79 aa)) form the RRM domain. Serine 198 is subject to Phosphoserine.

The protein belongs to the eIF-3 subunit G family. As to quaternary structure, component of the eukaryotic translation initiation factor 3 (eIF-3) complex. The eIF-3 complex interacts with pix.

The protein resides in the cytoplasm. In terms of biological role, RNA-binding component of the eukaryotic translation initiation factor 3 (eIF-3) complex, which is involved in protein synthesis of a specialized repertoire of mRNAs and, together with other initiation factors, stimulates binding of mRNA and methionyl-tRNAi to the 40S ribosome. The eIF-3 complex specifically targets and initiates translation of a subset of mRNAs involved in cell proliferation. This subunit can bind 18S rRNA. The chain is Eukaryotic translation initiation factor 3 subunit G-1 from Drosophila melanogaster (Fruit fly).